A 138-amino-acid chain; its full sequence is Phosphoribosyl-AMP cyclohydrolase (138 aa).

Position 84 (Asp84) interacts with Mg(2+). Cys85 serves as a coordination point for Zn(2+). Residues Asp86 and Asp88 each contribute to the Mg(2+) site. Zn(2+) is bound by residues Cys102 and Cys109.

It belongs to the PRA-CH family. In terms of assembly, homodimer. The cofactor is Mg(2+). It depends on Zn(2+) as a cofactor.

Its subcellular location is the cytoplasm. The catalysed reaction is 1-(5-phospho-beta-D-ribosyl)-5'-AMP + H2O = 1-(5-phospho-beta-D-ribosyl)-5-[(5-phospho-beta-D-ribosylamino)methylideneamino]imidazole-4-carboxamide. The protein operates within amino-acid biosynthesis; L-histidine biosynthesis; L-histidine from 5-phospho-alpha-D-ribose 1-diphosphate: step 3/9. In terms of biological role, catalyzes the hydrolysis of the adenine ring of phosphoribosyl-AMP. The sequence is that of Phosphoribosyl-AMP cyclohydrolase from Burkholderia vietnamiensis (strain G4 / LMG 22486) (Burkholderia cepacia (strain R1808)).